Here is a 1279-residue protein sequence, read N- to C-terminus: Sterol regulatory element-binding protein cleavage-activating protein (1279 aa).

Over 1–18 the chain is Cytoplasmic; sequence MTLTERLREKISQAFYNH. A helical transmembrane segment spans residues 19-39; it reads GLLCASYPIPIILFTGLCILA. The Lumenal segment spans residues 40–279; that stretch reads CCYPLLKLPL…SLVHVHFKEE (240 aa). A loop-1 region spans residues 46 to 284; that stretch reads KLPLPGTGPV…HFKEEIGIAE (239 aa). Residues 60–81 form a disordered region; that stretch reads PVKDYSPPPSASDHKPGEPSEQ. N-linked (GlcNAc...) asparagine glycosylation is present at asparagine 263. A helical transmembrane segment spans residues 280 to 300; that stretch reads IGIAELIPLVTTYIILFAYIY. One can recognise an SSD domain in the interval 284–442; the sequence is ELIPLVTTYI…MPFFTTVLSI (159 aa). Over 301-312 the chain is Cytoplasmic; that stretch reads FSTRKIDMVKSK. A helical membrane pass occupies residues 313–333; the sequence is WGLALAAVVTVLSSLLMSVGL. The Lumenal segment spans residues 334 to 344; it reads CTLFGLTPTLN. Residues 345-365 form a helical membrane-spanning segment; that stretch reads GGEIFPYLVVVIGLENVLVLT. Over 366–401 the chain is Cytoplasmic; that stretch reads KSVVSTPVDLEVKLRIAQGLSSESWSIMKNMATELG. The chain crosses the membrane as a helical span at residues 402 to 422; that stretch reads IILIGYFTLVPAIQEFCLFAV. Residue valine 423 is a topological domain, lumenal. The chain crosses the membrane as a helical span at residues 424-444; the sequence is GLVSDFFLQMPFFTTVLSIDI. Over 445–518 the chain is Cytoplasmic; it reads RRMELADLNK…FLARTRLAQR (74 aa). Residues 447 to 452 carry the ER export signal motif; that stretch reads MELADL. Glycyl lysine isopeptide (Lys-Gly) (interchain with G-Cter in ubiquitin) cross-links involve residues lysine 454 and lysine 466. Residues 519 to 539 form a helical membrane-spanning segment; the sequence is LIMAGTVVWIGILAYTDPAGL. The segment at 535–710 is loop-7; that stretch reads DPAGLRTYLA…QAHRDVTLYK (176 aa). The Lumenal segment spans residues 540–707; sequence RTYLAAQVTE…GVAQAHRDVT (168 aa). A disordered region spans residues 588–617; sequence LENQTLPGEPPEPGGQAEGVHDSPAPEVTW. Asparagine 590 and asparagine 641 each carry an N-linked (GlcNAc...) asparagine glycan. Residues 668 to 696 are disordered; the sequence is EGRHPQDSRSAWSPPQPAQGGLWDAGPKG. A helical membrane pass occupies residues 708–728; that stretch reads LYKVAALGLATGILLVLLLCL. Residues 729-1279 lie on the Cytoplasmic side of the membrane; that stretch reads YRVLCPRNYG…YVPSVLEKLD (551 aa). Residues 730–1279 are interaction with SREBF2; sequence RVLCPRNYGQ…YVPSVLEKLD (550 aa). A WD 1 repeat occupies 770-810; the sequence is VLRGHLMDIECLASDGMLLVSCCLAGHVCVWDAQTGDCLTR. Phosphoserine occurs at positions 821, 837, 843, and 850. 3 disordered regions span residues 834–868, 883–903, and 925–959; these read ERLS…LFGD, HPRL…CRRT, and VPMH…GSPS. Over residues 885 to 896 the composition is skewed to basic and acidic residues; that stretch reads RLPELDHPEPRH. Pro residues predominate over residues 929-944; the sequence is TPAPRPPSPGPTPPQT. Serine 936 is modified (phosphoserine). 2 WD repeats span residues 952-1002 and 1005-1042; these read PPEK…LRCS and EVAS…ALSP. Position 1051 is an omega-N-methylarginine (arginine 1051). 4 WD repeats span residues 1077-1114, 1117-1155, 1158-1195, and 1197-1235; these read AHQK…CLFT, GHSG…RVSH, AHRG…KLYS, and QQDL…LLQT.

It belongs to the WD repeat SCAP family. As to quaternary structure, membrane region forms a homotetramer. Component of the SCAP-SREBP complex (composed of SCAP and SREBF1/SREBP1 or SREBF2/SREBP2); interacts with SREBF1/SREBP1 or SREBF2/SREBP2 through its C-terminal cytoplasmic domain. Forms a ternary complex with INSIG1 or INSIG2 through its transmembrane domains at high sterol concentrations. Interacts with PAQR3; the interaction anchors the SCAP-SREBP complex to the Golgi apparatus in low cholesterol conditions. Interacts with the SEC23-SEC24 complex in a SAR1-GTP-dependent manner through an ER export signal in its third cytoplasmic loop. Interacts with RNF139; the interaction inhibits the interaction of SCAP with SEC24B and hampering the ER to Golgi transport of the SCAP-SREBP complex. Interacts with SPRING1. Post-translationally, ubiquitinated at Lys-454 and Lys-466. RNF145 triggers ubiquitination of SCAP, likely inhibiting SCAP-SREBP complex transport to the Golgi apparatus and the subsequent processing/maturation of SREBF2/SREBP2. In terms of tissue distribution, widely expressed with higher levels in lung, kidney, gut, brain and adipose tissue. Expressed in liver and muscle. Isoform 3 expressed in testis. As to expression, expressed in testis.

It is found in the endoplasmic reticulum membrane. The protein resides in the golgi apparatus membrane. The protein localises to the cytoplasmic vesicle. It localises to the COPII-coated vesicle membrane. In terms of biological role, escort protein required for cholesterol as well as lipid homeostasis. Regulates export of the SCAP-SREBP complex from the endoplasmic reticulum to the Golgi upon low cholesterol, thereby regulating the processing of sterol regulatory element-binding proteins (SREBPs) SREBF1/SREBP1 and SREBF2/SREBP2. At high sterol concentrations, formation of a ternary complex with INSIG (INSIG1 or INSIG2) leads to mask the ER export signal in SCAP, promoting retention of the complex in the endoplasmic reticulum. Low sterol concentrations trigger release of INSIG, a conformational change in the SSD domain of SCAP, unmasking of the ER export signal, promoting recruitment into COPII-coated vesicles and transport of the SCAP-SREBP to the Golgi: in the Golgi, SREBPs are then processed, releasing the transcription factor fragment of SREBPs from the membrane, its import into the nucleus and up-regulation of LDLR, INSIG1 and the mevalonate pathway. Binds cholesterol via its SSD domain. This Sus scrofa (Pig) protein is Sterol regulatory element-binding protein cleavage-activating protein.